The chain runs to 236 residues: Ribosome-inactivating protein saporin-3 (236 aa).

E148 is a catalytic residue.

The protein belongs to the ribosome-inactivating protein family. Type 1 RIP subfamily.

The enzyme catalyses Endohydrolysis of the N-glycosidic bond at one specific adenosine on the 28S rRNA.. Ribosome-inactivating protein of type 1, inhibits protein synthesis in animal cells. Useful as immunotoxin for pharmacological applications. In Saponaria officinalis (Common soapwort), this protein is Ribosome-inactivating protein saporin-3 (SAP3).